The sequence spans 1133 residues: RNA-dependent RNA polymerase 2 (1133 aa).

3 residues coordinate Mg(2+): aspartate 830, aspartate 832, and aspartate 834.

This sequence belongs to the RdRP family. Interacts with NRPD1 and SHH1. Associates with Pol IV complex, forming an interpolymerase channel bridging their active sites, through which the Pol IV-generated transcript is handed over to the RDR2 active site after being backtracked, where it is used as the template for double-stranded RNA (dsRNA) synthesis. Interacts with JMJ24.

It is found in the nucleus. The protein localises to the nucleoplasm. The protein resides in the nucleolus. It carries out the reaction RNA(n) + a ribonucleoside 5'-triphosphate = RNA(n+1) + diphosphate. RNA-dependent direct polymerase involved in the production of small interfering RNAs (siRNAs). Binds to single-stranded RNA (ssRNA); engages ssRNAs longer than 7 nucleotides and initiates internal to their 3' ends. Able to transcribe the RNA of an RNA/DNA hybrid, the transcript produced by Pol IV, if its 3' end is accessible, to generate double-stranded small interfering RNAs (dsRNAs) precursor essential for establishing and maintaining DNA methylation. Required for the biogenesis of endogenous siRNAs of 24 nucleotide which derive from heterochromatin and DNA repeats such as transposons or endogenous gene tandem repeats, such as repeats present in FWA gene. Involved in transcriptional gene silencing (TGS). Component of the RNA-directed DNA methylation (RdDM) silencing pathway that utilizes siRNAs to guide DNA methyltransferases to asymmetric cytosines. Involved in control of flowering time through RdDM of FWA locus. Required for reception of long-distance mRNA silencing in the shoot. Required for the formation of telomeric siRNAs and the RNA-dependent DNA methylation of asymmetric cytosines in telomeric (5'-CCCTAAA-3') repeats. This is RNA-dependent RNA polymerase 2 from Arabidopsis thaliana (Mouse-ear cress).